The sequence spans 184 residues: UPF0397 protein SAB2561c (184 aa).

The next 5 helical transmembrane spans lie at 11–31 (VVAI…VVIP), 44–64 (AFLA…TGLV), 77–97 (AWWS…WIGL), 111–131 (MIYF…LIAP), and 148–168 (QGVI…TILL).

The protein belongs to the UPF0397 family.

It is found in the cell membrane. The chain is UPF0397 protein SAB2561c from Staphylococcus aureus (strain bovine RF122 / ET3-1).